Reading from the N-terminus, the 210-residue chain is Large ribosomal subunit protein uL3 (210 aa).

The disordered stretch occupies residues 136–156; that stretch reads THGTEKAHRSGGSIGNNTEPG.

Belongs to the universal ribosomal protein uL3 family. Part of the 50S ribosomal subunit. Forms a cluster with proteins L14 and L19.

In terms of biological role, one of the primary rRNA binding proteins, it binds directly near the 3'-end of the 23S rRNA, where it nucleates assembly of the 50S subunit. In Solidesulfovibrio magneticus (strain ATCC 700980 / DSM 13731 / RS-1) (Desulfovibrio magneticus), this protein is Large ribosomal subunit protein uL3.